The chain runs to 109 residues: ATP-dependent Clp protease adapter protein ClpS (109 aa).

Residues 1–25 (MSERKEGDSGAGVRSAVITQTKPKT) form a disordered region.

This sequence belongs to the ClpS family. In terms of assembly, binds to the N-terminal domain of the chaperone ClpA.

Involved in the modulation of the specificity of the ClpAP-mediated ATP-dependent protein degradation. This Phenylobacterium zucineum (strain HLK1) protein is ATP-dependent Clp protease adapter protein ClpS.